The chain runs to 307 residues: Mycothiol acetyltransferase (307 aa).

2 N-acetyltransferase domains span residues 12 to 157 (TRTD…PPLP) and 160 to 307 (VTLR…YQLG). A 1D-myo-inositol 2-(L-cysteinylamino)-2-deoxy-alpha-D-glucopyranoside-binding site is contributed by Glu43. Residue 87 to 89 (LAV) participates in acetyl-CoA binding. Residues Glu187, Lys227, and Glu239 each coordinate 1D-myo-inositol 2-(L-cysteinylamino)-2-deoxy-alpha-D-glucopyranoside. Acetyl-CoA contacts are provided by residues 243–245 (LGV) and 250–256 (HGGGLGK). Tyr278 is a 1D-myo-inositol 2-(L-cysteinylamino)-2-deoxy-alpha-D-glucopyranoside binding site.

This sequence belongs to the acetyltransferase family. MshD subfamily. Monomer.

The enzyme catalyses 1D-myo-inositol 2-(L-cysteinylamino)-2-deoxy-alpha-D-glucopyranoside + acetyl-CoA = mycothiol + CoA + H(+). Functionally, catalyzes the transfer of acetyl from acetyl-CoA to desacetylmycothiol (Cys-GlcN-Ins) to form mycothiol. In Salinispora tropica (strain ATCC BAA-916 / DSM 44818 / JCM 13857 / NBRC 105044 / CNB-440), this protein is Mycothiol acetyltransferase.